Reading from the N-terminus, the 2371-residue chain is NBAS subunit of NRZ tethering complex (2371 aa).

The interaction with USE1 stretch occupies residues 1 to 1035; the sequence is MAAPESGPAL…KTEATTKLHD (1035 aa). 2 WD repeats span residues 130–169 and 316–355; these read DPKP…LFVI and QEQD…QQGE. Residues Ser-473 and Ser-475 each carry the phosphoserine modification. Positions 1036 to 2371 are interaction with ZW10 and RINT1; it reads MVDQLEQILS…TALRAAQHWV (1336 aa). Lys-1057 is subject to N6-acetyllysine.

As to quaternary structure, component of the NRZ complex composed of NBAS, ZW10 and RINT1/TIP20L; NRZ associates with SNAREs STX18, USE1, BNIP1/SEC20L and SEC22B (the assembly has been described as syntaxin 18 complex); links NRZ to SNARE USE1. As to expression, broadly expressed, with highest levels in heart and skeletal muscle, and lowest levels in liver, small intestine and thymus. Well expressed in retinal ganglion cells, epidermal skin cells, and leukocytes. Up-regulated together with N-myc in some neuroblastoma cell lines.

It localises to the cytoplasm. The protein resides in the endoplasmic reticulum. It is found in the endoplasmic reticulum membrane. Its function is as follows. Involved in Golgi-to-endoplasmic reticulum (ER) retrograde transport; the function is proposed to depend on its association in the NRZ complex which is believed to play a role in SNARE assembly at the ER. Required for normal embryonic development. May play a role in the nonsense-mediated decay pathway of mRNAs containing premature stop codons. The polypeptide is NBAS subunit of NRZ tethering complex (Homo sapiens (Human)).